The following is a 196-amino-acid chain: UPF0215 protein MM_1007 (196 aa).

This sequence belongs to the UPF0215 family.

This is UPF0215 protein MM_1007 from Methanosarcina mazei (strain ATCC BAA-159 / DSM 3647 / Goe1 / Go1 / JCM 11833 / OCM 88) (Methanosarcina frisia).